Consider the following 240-residue polypeptide: DNA repair protein RecO (240 aa).

The protein belongs to the RecO family.

Functionally, involved in DNA repair and RecF pathway recombination. This Actinobacillus pleuropneumoniae serotype 5b (strain L20) protein is DNA repair protein RecO.